The following is a 421-amino-acid chain: NADH-dependent phenylglyoxylate dehydrogenase subunit epsilon (421 aa).

FAD-binding positions include 15-18 (SSHA), 39-40 (TR), and 279-297 (ATAQ…NAIL).

The protein belongs to the FAD-dependent oxidoreductase family. Dimer of heteropentamers composed of an alpha (PadG), a beta (PadI), a gamma (PadE), a delta (PadF) and an epsilon (PadH) subunit. It depends on FAD as a cofactor.

The enzyme catalyses phenylglyoxylate + NAD(+) + CoA = benzoyl-CoA + CO2 + NADH. Activated by magnesium ions and thiamine diphosphate. In terms of biological role, involved in the anaerobic metabolism of phenylalanine and phenylacetate. Catalyzes the oxidative decarboxylation of phenylglyoxylate to benzoyl-CoA and CO(2). It can also react slowly with 2-oxo-3-methylbutanoate and use different electron acceptors such as benzyl viologen, methyl viologen, FAD or FMN, but NAD seems to be the physiological electron acceptor. Also catalyzes an isotope exchange between CO(2) and the carboxyl group which proves partial or complete reversibility of the oxidative decarboxylation reaction. In Aromatoleum evansii (Azoarcus evansii), this protein is NADH-dependent phenylglyoxylate dehydrogenase subunit epsilon (padH).